Consider the following 502-residue polypeptide: Protein nucleotidyltransferase YdiU (502 aa).

ATP contacts are provided by glycine 98, glycine 100, arginine 101, lysine 121, aspartate 133, glycine 134, arginine 184, and arginine 191. Catalysis depends on aspartate 260, which acts as the Proton acceptor. Residues asparagine 261 and aspartate 270 each contribute to the Mg(2+) site. Aspartate 270 lines the ATP pocket.

The protein belongs to the SELO family. Mg(2+) serves as cofactor. Mn(2+) is required as a cofactor.

The enzyme catalyses L-seryl-[protein] + ATP = 3-O-(5'-adenylyl)-L-seryl-[protein] + diphosphate. The catalysed reaction is L-threonyl-[protein] + ATP = 3-O-(5'-adenylyl)-L-threonyl-[protein] + diphosphate. It catalyses the reaction L-tyrosyl-[protein] + ATP = O-(5'-adenylyl)-L-tyrosyl-[protein] + diphosphate. It carries out the reaction L-histidyl-[protein] + UTP = N(tele)-(5'-uridylyl)-L-histidyl-[protein] + diphosphate. The enzyme catalyses L-seryl-[protein] + UTP = O-(5'-uridylyl)-L-seryl-[protein] + diphosphate. The catalysed reaction is L-tyrosyl-[protein] + UTP = O-(5'-uridylyl)-L-tyrosyl-[protein] + diphosphate. Functionally, nucleotidyltransferase involved in the post-translational modification of proteins. It can catalyze the addition of adenosine monophosphate (AMP) or uridine monophosphate (UMP) to a protein, resulting in modifications known as AMPylation and UMPylation. The polypeptide is Protein nucleotidyltransferase YdiU (Rhizobium rhizogenes (strain K84 / ATCC BAA-868) (Agrobacterium radiobacter)).